The primary structure comprises 395 residues: Elongation factor Tu (395 aa).

The tr-type G domain maps to 10-204 (KPHVNIGTIG…AVDEYIPTPQ (195 aa)). The tract at residues 19–26 (GHVDHGKT) is G1. Residue 19–26 (GHVDHGKT) participates in GTP binding. Residue Thr-26 coordinates Mg(2+). The interval 60–64 (GITIS) is G2. The tract at residues 81–84 (DCPG) is G3. Residues 81–85 (DCPGH) and 136–139 (NKCD) each bind GTP. Residues 136-139 (NKCD) are G4. Residues 174–176 (SAL) form a G5 region.

It belongs to the TRAFAC class translation factor GTPase superfamily. Classic translation factor GTPase family. EF-Tu/EF-1A subfamily. As to quaternary structure, monomer.

Its subcellular location is the cytoplasm. It catalyses the reaction GTP + H2O = GDP + phosphate + H(+). Functionally, GTP hydrolase that promotes the GTP-dependent binding of aminoacyl-tRNA to the A-site of ribosomes during protein biosynthesis. The protein is Elongation factor Tu of Geobacillus stearothermophilus (Bacillus stearothermophilus).